We begin with the raw amino-acid sequence, 608 residues long: UvrABC system protein C (608 aa).

One can recognise a GIY-YIG domain in the interval 22 to 100 (EKPGIYQYLN…IKKYKPRYNV (79 aa)). The UVR domain maps to 214-249 (QEISRLLYQRMQDLAAEMKFEEAQKVKEKYALIENY).

This sequence belongs to the UvrC family. Interacts with UvrB in an incision complex.

The protein resides in the cytoplasm. Functionally, the UvrABC repair system catalyzes the recognition and processing of DNA lesions. UvrC both incises the 5' and 3' sides of the lesion. The N-terminal half is responsible for the 3' incision and the C-terminal half is responsible for the 5' incision. This Bacteroides fragilis (strain ATCC 25285 / DSM 2151 / CCUG 4856 / JCM 11019 / LMG 10263 / NCTC 9343 / Onslow / VPI 2553 / EN-2) protein is UvrABC system protein C.